Consider the following 427-residue polypeptide: Enolase (427 aa).

Position 163 (Gln163) interacts with (2R)-2-phosphoglycerate. The Proton donor role is filled by Glu205. Asp242, Glu285, and Asp312 together coordinate Mg(2+). (2R)-2-phosphoglycerate contacts are provided by Lys337, Arg366, Ser367, and Lys388. Lys337 functions as the Proton acceptor in the catalytic mechanism.

It belongs to the enolase family. Mg(2+) is required as a cofactor.

It is found in the cytoplasm. The protein resides in the secreted. The protein localises to the cell surface. It catalyses the reaction (2R)-2-phosphoglycerate = phosphoenolpyruvate + H2O. It functions in the pathway carbohydrate degradation; glycolysis; pyruvate from D-glyceraldehyde 3-phosphate: step 4/5. Functionally, catalyzes the reversible conversion of 2-phosphoglycerate (2-PG) into phosphoenolpyruvate (PEP). It is essential for the degradation of carbohydrates via glycolysis. The protein is Enolase of Burkholderia mallei (strain NCTC 10247).